The primary structure comprises 446 residues: Glucose-6-phosphate isomerase (446 aa).

The active-site Proton donor is the Glu288. Residues His309 and Lys423 contribute to the active site.

It belongs to the GPI family.

The protein localises to the cytoplasm. It catalyses the reaction alpha-D-glucose 6-phosphate = beta-D-fructose 6-phosphate. The protein operates within carbohydrate biosynthesis; gluconeogenesis. It functions in the pathway carbohydrate degradation; glycolysis; D-glyceraldehyde 3-phosphate and glycerone phosphate from D-glucose: step 2/4. Its function is as follows. Catalyzes the reversible isomerization of glucose-6-phosphate to fructose-6-phosphate. The polypeptide is Glucose-6-phosphate isomerase (Lacticaseibacillus casei (strain BL23) (Lactobacillus casei)).